Consider the following 1206-residue polypeptide: Translocase of chloroplast 132, chloroplastic (1206 aa).

Glycine 2 carries the post-translational modification N-acetylglycine. Residues 13–33 (REDKKLAEDRISDEQVVKNEL) are a coiled coil. 2 disordered regions span residues 33 to 75 (LVRS…SDDL) and 97 to 119 (VGDL…VGES). Acidic residues predominate over residues 39 to 49 (VRDDNEDEVFE). Serine 195 carries the phosphoserine modification. Positions 233 to 499 (QTEQEVEEGE…TTTEADEHDE (267 aa)) are disordered. Over residues 309–324 (AYTSNIVTNASGDNEV) the composition is skewed to polar residues. Residues 325–336 (SSAVTSSPLEES) are compositionally biased toward low complexity. A phosphoserine mark is found at serine 337, serine 363, and serine 398. Polar residues predominate over residues 357–379 (LASSPHSYPESTEVHSNSGSPGV). The span at 403 to 427 (KELEKQQSSRVHVDPEITENSHVET) shows a compositional bias: basic and acidic residues. A compositionally biased stretch (low complexity) spans 430–440 (EVVSSVSPTES). The span at 468 to 492 (APQQSRVNGNGSHNQFQQAEDSTTT) shows a compositional bias: polar residues. In terms of domain architecture, AIG1-type G spans 572 to 801 (DFSCTIMVLG…KLQDNIPGRP (230 aa)). Positions 581–588 (GKSGVGKS) are G1. GTP is bound by residues 584 to 589 (GVGKSA) and 603 to 608 (DAFQMG). Residue serine 588 coordinates Mg(2+). Positions 603 to 606 (DAFQ) are homodimerization. Residues 607-611 (MGTKR) form a G2 region. Residues 628–631 (DTPG) are G3. The tract at residues 666–671 (RLDMQS) is homodimerization. The G4 stretch occupies residues 700–703 (THAA). Residues histidine 701 and 749–750 (EN) each bind GTP. Positions 749–751 (ENH) are G5. The tract at residues 824–862 (QPKLPEQQYGDEEDEDDLEESSDSDEESEYDQLPPFKSL) is disordered. Residues 832–853 (YGDEEDEDDLEESSDSDEESEY) show a composition bias toward acidic residues. Residues 1182–1199 (LAMVAIVPLFKKLLSYYY) form a helical membrane-spanning segment.

The protein belongs to the TRAFAC class TrmE-Era-EngA-EngB-Septin-like GTPase superfamily. AIG1/Toc34/Toc159-like paraseptin GTPase family. TOC159 subfamily. Homodimer. Part of the TOC core complex that includes 1 protein for the specific recognition of transit peptides surrounded by a ring composed of four proteins forming translocation channels, and four to five GTP-binding proteins providing energy. This core complex can interact with components of the TIC complex to form a larger import complex. Chloroplastic protein precursor such as prSS (precursor of the RuBisCO small subunit) interacts with these complexes. The TOC complex contains a specific subset of polar lipids such as digalactosyldiacylglyceride (DGDG), phosphatidylcholine (PC) and phosphatidylglycerol (PG). It depends on Mg(2+) as a cofactor. Post-translationally, phosphorylated by KOC1. Expressed in seedlings, leaves, flowers, and roots.

It localises to the plastid. The protein localises to the chloroplast outer membrane. Its subcellular location is the cytoplasm. In terms of biological role, GTPase involved in protein precursor import into chloroplasts. Seems to recognize chloroplast-destined precursor proteins and regulate their presentation to the translocation channel through GTP hydrolysis. Probably specialized in the import of nuclear encoded non-photosynthetic preproteins from the cytoplasm to the chloroplast. This Arabidopsis thaliana (Mouse-ear cress) protein is Translocase of chloroplast 132, chloroplastic.